The primary structure comprises 180 residues: Beta-lactoglobulin (180 aa).

The first 18 residues, 1–18 (MKCLLLALGLALACGIQA), serve as a signal peptide directing secretion. Intrachain disulfides connect Cys84–Cys178, Cys124–Cys137, and Cys124–Cys139.

It belongs to the calycin superfamily. Lipocalin family. Under physiological conditions beta-lactoglobulin exists as an equilibrium mixture of monomeric and dimeric forms. Interaction with LMBR1L is controversial. Alternate disulfide bonds occur in equal amounts. Synthesized in mammary gland and secreted in milk.

The protein resides in the secreted. In terms of biological role, primary component of whey, it binds retinol and is probably involved in the transport of that molecule. In Capra hircus (Goat), this protein is Beta-lactoglobulin (LGB).